A 129-amino-acid polypeptide reads, in one-letter code: Small ribosomal subunit protein uS11c (129 aa).

It belongs to the universal ribosomal protein uS11 family. In terms of assembly, part of the 30S ribosomal subunit.

Its subcellular location is the plastid. The protein localises to the chloroplast. This Oltmannsiellopsis viridis (Marine flagellate) protein is Small ribosomal subunit protein uS11c.